Consider the following 340-residue polypeptide: tRNA N6-adenosine threonylcarbamoyltransferase (340 aa).

Residues His-111 and His-115 each coordinate Fe cation. Residues 134-138, Asp-167, Gly-180, and Asn-276 each bind substrate; that span reads LVSGG. Fe cation is bound at residue Asp-304.

It belongs to the KAE1 / TsaD family. It depends on Fe(2+) as a cofactor.

It is found in the cytoplasm. It carries out the reaction L-threonylcarbamoyladenylate + adenosine(37) in tRNA = N(6)-L-threonylcarbamoyladenosine(37) in tRNA + AMP + H(+). Its function is as follows. Required for the formation of a threonylcarbamoyl group on adenosine at position 37 (t(6)A37) in tRNAs that read codons beginning with adenine. Is involved in the transfer of the threonylcarbamoyl moiety of threonylcarbamoyl-AMP (TC-AMP) to the N6 group of A37, together with TsaE and TsaB. TsaD likely plays a direct catalytic role in this reaction. The polypeptide is tRNA N6-adenosine threonylcarbamoyltransferase (Helicobacter pylori (strain G27)).